A 284-amino-acid polypeptide reads, in one-letter code: MDPRALPANWPYRSAAARRRVGPIDWWVIDTGPADGPVLLLLHGLGASGHSFRKMIPGLSARYRVIVPDLPGHGCSRSTARNRFGLKPMAEDLWKLCQHLNVTPAAVIGHSAGGAIALQLALDTPVPRVVGINAALDHFEGVAGVVFPMMARGLAALPFTAPLVTRFGASRQRIGQLLDMTGSVIDAAGKAYYTALIQTPEHVDGGLRMMAQWELGPLIGALPRIAKPVFLIAGNGDRAVPAHVSADAARFLPMATLRRIDGGHLIHEVAADGLSGMILDWLEG.

The region spanning 37-269 is the AB hydrolase-1 domain; that stretch reads PVLLLLHGLG…IDGGHLIHEV (233 aa).

Belongs to the lipase/esterase LIP3/BchO family.

It catalyses the reaction protoporphyrin IX + Mg(2+) + ATP + H2O = Mg-protoporphyrin IX + ADP + phosphate + 3 H(+). It functions in the pathway porphyrin-containing compound metabolism; bacteriochlorophyll biosynthesis (light-independent). The polypeptide is Magnesium-chelatase 30 kDa subunit (bchO) (Rhodobacter capsulatus (Rhodopseudomonas capsulata)).